The chain runs to 92 residues: Small ribosomal subunit protein bS20 (92 aa).

Residues 1-23 form a disordered region; it reads MANTTSAKKATRKIARRTDVNKA.

This sequence belongs to the bacterial ribosomal protein bS20 family.

Its function is as follows. Binds directly to 16S ribosomal RNA. In Rhizobium leguminosarum bv. trifolii (strain WSM2304), this protein is Small ribosomal subunit protein bS20.